The primary structure comprises 78 residues: Small ribosomal subunit protein bS18 (78 aa).

This sequence belongs to the bacterial ribosomal protein bS18 family. Part of the 30S ribosomal subunit. Forms a tight heterodimer with protein bS6.

Functionally, binds as a heterodimer with protein bS6 to the central domain of the 16S rRNA, where it helps stabilize the platform of the 30S subunit. This Limosilactobacillus fermentum (strain NBRC 3956 / LMG 18251) (Lactobacillus fermentum) protein is Small ribosomal subunit protein bS18.